The chain runs to 512 residues: Cytochrome P450 monooxygenase ABA1 (512 aa).

Residues 13 to 32 (HWLSGILAIATVYLATSYII) form a helical membrane-spanning segment. Residue Cys-458 coordinates heme.

Belongs to the cytochrome P450 family. It depends on heme as a cofactor.

The protein resides in the membrane. Its pathway is hormone biosynthesis. In terms of biological role, cytochrome P450 monooxygenase involved in the biosynthesis of abscisic acid (ABA), a phytohormone that acts antagonistically toward salicylic acid (SA), jasmonic acid (JA) and ethylene (ETH) signaling, to impede plant defense responses. During pathogen-host interaction, ABA plays a dual role in disease severity by increasing plant susceptibility and accelerating pathogenesis in the fungus itself. The first step of the pathway catalyzes the reaction from farnesyl diphosphate to alpha-ionylideneethane performed by the alpha-ionylideneethane synthase ABA3 via a three-step reaction mechanism involving 2 neutral intermediates, beta-farnesene and allofarnesene. The cytochrome P450 monooxygenase ABA1 might then be involved in the conversion of alpha-ionylideneethane to alpha-ionylideneacetic acid. Alpha-ionylideneacetic acid is further converted to abscisic acid in 2 steps involving the cytochrome P450 monooxygenase ABA2 and the short-chain dehydrogenase/reductase ABA4, via the intermediates 1'-deoxy-ABA or 1',4'-trans-diol-ABA, depending on the order of action of these 2 enzymes. ABA2 is responsible for the hydroxylation of carbon atom C-1' and ABA4 might be involved in the oxidation of the C-4' carbon atom. The protein is Cytochrome P450 monooxygenase ABA1 of Pyricularia oryzae (strain Y34) (Rice blast fungus).